Reading from the N-terminus, the 862-residue chain is uncharacterized protein (862 aa).

Disordered regions lie at residues histidine 45–valine 91, arginine 633–aspartate 824, and glycine 837–serine 862. 2 stretches are compositionally biased toward acidic residues: residues methionine 57–glutamate 69 and proline 78–valine 91. Composition is skewed to basic and acidic residues over residues arginine 633–lysine 650, arginine 657–lysine 686, and threonine 694–threonine 703. Residues glutamate 751–lysine 760 are compositionally biased toward basic residues. The segment covering lysine 761–serine 779 has biased composition (basic and acidic residues).

This is an uncharacterized protein from Ictaluridae (bullhead catfishes).